Here is a 450-residue protein sequence, read N- to C-terminus: MSQQHTLPVTLPPTLSQELLKNVSPPADIQQEQRKQPTPLPAPCQKVLSELPVAVPSKHEEKHATPVKGLLEQECGQLQQQEPQEQEVHLAKHQELQELQEQELHLGKQPEPQEQELHLGKQQQQQESQEQELYLGKQPEPQDQELHLGKQQAPQEQELHLGKQPEPQEQELHLGKQPEPQDQELYLGKRLEPQEQELHLGKQQQQQESQEQELDLGKQPEPQDQELHLGKQQAPQEQELHLGKQPEPQEQELHLVKQQEPQDQELHLGKRLEPQEQELHLGKQQQPQEQKLHPGEAAAAGVTGAGPAASKAARRATGAGTAPGKAAAAAGATGAGTAATAPATAEERQKAESLEQQLEQEKAQREEQLKEQLEEKKRILDQQLDQEVAKRYEQLGVKKEQLLQPLGQQEGQLEKPVFVPAPGQVQDIQPPQPPKGEVLLPAEQQQEPEV.

The segment covering 1 to 19 has biased composition (polar residues); it reads MSQQHTLPVTLPPTLSQEL. Disordered regions lie at residues 1–43, 77–370, and 422–450; these read MSQQ…LPAP, QLQQ…EQLK, and PGQV…EPEV. Positions 86 to 108 are enriched in basic and acidic residues; that stretch reads QEVHLAKHQELQELQEQELHLGK. Positions 120–135 are enriched in low complexity; sequence GKQQQQQESQEQELYL. Basic and acidic residues-rich tracts occupy residues 187-200 and 264-281; these read LGKR…ELHL and QELH…ELHL. Positions 295-344 are enriched in low complexity; sequence GEAAAAGVTGAGPAASKAARRATGAGTAPGKAAAAAGATGAGTAATAPAT. A compositionally biased stretch (basic and acidic residues) spans 345–370; it reads AEERQKAESLEQQLEQEKAQREEQLK.

Belongs to the involucrin family. Directly or indirectly cross-linked to cornifelin (CNFN). In terms of processing, substrate of transglutaminase. Specific glutamines or lysines are cross-linked to keratins, desmoplakin and to inter involucrin molecules. Keratinocytes of epidermis and other stratified squamous epithelia.

The protein resides in the cytoplasm. Its function is as follows. Part of the insoluble cornified cell envelope (CE) of stratified squamous epithelia. The sequence is that of Involucrin (IVL) from Lemur catta (Ring-tailed lemur).